Consider the following 149-residue polypeptide: 3-hydroxyacyl-[acyl-carrier-protein] dehydratase FabZ (149 aa).

Histidine 50 is a catalytic residue.

This sequence belongs to the thioester dehydratase family. FabZ subfamily.

Its subcellular location is the cytoplasm. The catalysed reaction is a (3R)-hydroxyacyl-[ACP] = a (2E)-enoyl-[ACP] + H2O. Functionally, involved in unsaturated fatty acids biosynthesis. Catalyzes the dehydration of short chain beta-hydroxyacyl-ACPs and long chain saturated and unsaturated beta-hydroxyacyl-ACPs. The protein is 3-hydroxyacyl-[acyl-carrier-protein] dehydratase FabZ of Pediococcus pentosaceus (strain ATCC 25745 / CCUG 21536 / LMG 10740 / 183-1w).